We begin with the raw amino-acid sequence, 402 residues long: Phosphoglycerate kinase (402 aa).

Substrate is bound by residues 24–26 (DFN), Arg40, 63–66 (HFGR), Arg122, and Arg155. ATP contacts are provided by residues Lys206, Gly297, Glu328, and 358 to 361 (GGDS).

This sequence belongs to the phosphoglycerate kinase family. Monomer.

The protein localises to the cytoplasm. It carries out the reaction (2R)-3-phosphoglycerate + ATP = (2R)-3-phospho-glyceroyl phosphate + ADP. It functions in the pathway carbohydrate degradation; glycolysis; pyruvate from D-glyceraldehyde 3-phosphate: step 2/5. This chain is Phosphoglycerate kinase, found in Prochlorococcus marinus (strain MIT 9515).